The primary structure comprises 92 residues: Acylphosphatase (92 aa).

One can recognise an Acylphosphatase-like domain in the interval 5–90 (TWRLVAHGRV…GEFAGFEFRP (86 aa)). Residues arginine 20 and asparagine 38 contribute to the active site.

Belongs to the acylphosphatase family.

The catalysed reaction is an acyl phosphate + H2O = a carboxylate + phosphate + H(+). This Cupriavidus necator (strain ATCC 17699 / DSM 428 / KCTC 22496 / NCIMB 10442 / H16 / Stanier 337) (Ralstonia eutropha) protein is Acylphosphatase (acyP).